The chain runs to 138 residues: MRLTQGTFSFLPDLTDEQINKQLAYIVSKGLSANVEYTDDPHPRNSYWELWGLPLFDVKDASAVMYEISSCRKAKPNYYVKVNAFDNTRGIESCVMSFIVNRPANEPGFLLQRQDFEGRTMKYSLHSYATEKPEGARY.

This sequence belongs to the RuBisCO small chain family. Heterohexadecamer of 8 large and 8 small subunits.

The protein localises to the plastid. The protein resides in the chloroplast. In terms of biological role, ruBisCO catalyzes two reactions: the carboxylation of D-ribulose 1,5-bisphosphate, the primary event in carbon dioxide fixation, as well as the oxidative fragmentation of the pentose substrate in the photorespiration process. Both reactions occur simultaneously and in competition at the same active site. Although the small subunit is not catalytic it is essential for maximal activity. This chain is Ribulose bisphosphate carboxylase small subunit, found in Pyropia yezoensis (Susabi-nori).